A 379-amino-acid polypeptide reads, in one-letter code: Reducing end xylose-releasing exo-oligoxylanase (379 aa).

The active-site Proton donor is glutamate 66. The active-site Proton acceptor is the aspartate 259.

The protein belongs to the glycosyl hydrolase 8 (cellulase D) family.

It catalyses the reaction Hydrolysis of (1-&gt;4)-beta-D-xylose residues from the reducing end of oligosaccharides.. Hydrolyzes xylooligosaccharides with a degree of polymerization of greater than or equal to 3, releasing xylose from the reducing end. Has low activity on birchwood xylan, oat spelt xylan and arabinoxylan. The polypeptide is Reducing end xylose-releasing exo-oligoxylanase (Bifidobacterium adolescentis (strain ATCC 15703 / DSM 20083 / NCTC 11814 / E194a)).